The following is a 572-amino-acid chain: Receptor-transporting protein 5 (572 aa).

Residues 52 to 148 (SRLQCGHCPG…AYEGCCEACE (97 aa)) form a 3CxxC-type zinc finger. A helical transmembrane segment spans residues 544-560 (FWIWVSMTVCVFWLMCM).

It localises to the membrane. The protein is Receptor-transporting protein 5 (RTP5) of Homo sapiens (Human).